Here is a 175-residue protein sequence, read N- to C-terminus: Adenine phosphoribosyltransferase (175 aa).

It belongs to the purine/pyrimidine phosphoribosyltransferase family. In terms of assembly, homodimer.

The protein localises to the cytoplasm. It catalyses the reaction AMP + diphosphate = 5-phospho-alpha-D-ribose 1-diphosphate + adenine. The protein operates within purine metabolism; AMP biosynthesis via salvage pathway; AMP from adenine: step 1/1. Its function is as follows. Catalyzes a salvage reaction resulting in the formation of AMP, that is energically less costly than de novo synthesis. This is Adenine phosphoribosyltransferase from Lacticaseibacillus paracasei (strain ATCC 334 / BCRC 17002 / CCUG 31169 / CIP 107868 / KCTC 3260 / NRRL B-441) (Lactobacillus paracasei).